A 210-amino-acid polypeptide reads, in one-letter code: ATP-dependent Clp protease proteolytic subunit (210 aa).

The active-site Nucleophile is S106. H131 is an active-site residue.

This sequence belongs to the peptidase S14 family. In terms of assembly, fourteen ClpP subunits assemble into 2 heptameric rings which stack back to back to give a disk-like structure with a central cavity, resembling the structure of eukaryotic proteasomes.

Its subcellular location is the cytoplasm. The enzyme catalyses Hydrolysis of proteins to small peptides in the presence of ATP and magnesium. alpha-casein is the usual test substrate. In the absence of ATP, only oligopeptides shorter than five residues are hydrolyzed (such as succinyl-Leu-Tyr-|-NHMec, and Leu-Tyr-Leu-|-Tyr-Trp, in which cleavage of the -Tyr-|-Leu- and -Tyr-|-Trp bonds also occurs).. Its function is as follows. Cleaves peptides in various proteins in a process that requires ATP hydrolysis. Has a chymotrypsin-like activity. Plays a major role in the degradation of misfolded proteins. The sequence is that of ATP-dependent Clp protease proteolytic subunit from Rhodopseudomonas palustris (strain BisB18).